A 461-amino-acid chain; its full sequence is Tubulin gamma-1 chain (461 aa).

142-148 (AGGTGSG) contributes to the GTP binding site.

This sequence belongs to the tubulin family.

It localises to the cytoplasm. The protein localises to the cytoskeleton. Its subcellular location is the microtubule organizing center. It is found in the centrosome. Its function is as follows. Tubulin is the major constituent of microtubules. The gamma chain is found at microtubule organizing centers (MTOC) such as the spindle poles or the centrosome, suggesting that it is involved in the minus-end nucleation of microtubule assembly. This is Tubulin gamma-1 chain from Euplotoides octocarinatus (Freshwater ciliate).